We begin with the raw amino-acid sequence, 153 residues long: 17.6 kDa class I heat shock protein (153 aa).

The sHSP domain occupies 38–153; sequence ETAAIVNARI…PMVKAIDISG (116 aa).

This sequence belongs to the small heat shock protein (HSP20) family. In terms of assembly, forms oligomeric structures.

It is found in the cytoplasm. This Helianthus annuus (Common sunflower) protein is 17.6 kDa class I heat shock protein (HSP17.6).